Reading from the N-terminus, the 315-residue chain is NAD-dependent protein lipoamidase sirtuin-4, mitochondrial (315 aa).

A mitochondrion-targeting transit peptide spans 1–29 (MRMSFGLTFKRTAKVHWRANFSQQCSLRS). Positions 38 to 315 (PPLDPEKVKE…GELLPLIDPR (278 aa)) constitute a Deacetylase sirtuin-type domain. NAD(+) contacts are provided by residues 63–83 (GAGISTESGIPDYRSEKVGLY) and 144–147 (QNVD). The active-site Proton acceptor is His162. Cys170, Cys173, Cys221, and Cys224 together coordinate Zn(2+). NAD(+) is bound by residues 261 to 263 (GSS), 287 to 289 (NIG), and Cys305.

The protein belongs to the sirtuin family. Class II subfamily. Interacts with GLUD1, IDE and SLC25A5. Interacts with DLAT and PDHX. Interacts with MCCC1 (via the biotin carboxylation domain). Interacts with PCCA and PC. Zn(2+) serves as cofactor.

Its subcellular location is the mitochondrion matrix. The enzyme catalyses N(6)-[(R)-lipoyl]-L-lysyl-[protein] + NAD(+) + H2O = 2''-O-lipoyl-ADP-D-ribose + nicotinamide + L-lysyl-[protein]. It carries out the reaction N(6)-biotinyl-L-lysyl-[protein] + NAD(+) + H2O = 2''-O-biotinyl-ADP-D-ribose + nicotinamide + L-lysyl-[protein]. The catalysed reaction is N(6)-acetyl-L-lysyl-[protein] + NAD(+) + H2O = 2''-O-acetyl-ADP-D-ribose + nicotinamide + L-lysyl-[protein]. It catalyses the reaction L-cysteinyl-[protein] + NAD(+) = S-(ADP-D-ribosyl)-L-cysteinyl-[protein] + nicotinamide + H(+). Functionally, acts as a NAD-dependent protein lipoamidase, biotinylase, deacetylase and ADP-ribosyl transferase. Catalyzes more efficiently removal of lipoyl- and biotinyl- than acetyl-lysine modifications. Inhibits the pyruvate dehydrogenase complex (PDH) activity via the enzymatic hydrolysis of the lipoamide cofactor from the E2 component, DLAT, in a phosphorylation-independent manner. Catalyzes the transfer of ADP-ribosyl groups onto target proteins, including mitochondrial GLUD1, inhibiting GLUD1 enzyme activity. Acts as a negative regulator of mitochondrial glutamine metabolism by mediating mono ADP-ribosylation of GLUD1: expressed in response to DNA damage and negatively regulates anaplerosis by inhibiting GLUD1, leading to block metabolism of glutamine into tricarboxylic acid cycle and promoting cell cycle arrest. In response to mTORC1 signal, SIRT4 expression is repressed, promoting anaplerosis and cell proliferation. Acts as a tumor suppressor. Also acts as a NAD-dependent protein deacetylase: mediates deacetylation of 'Lys-471' of MLYCD, inhibiting its activity, thereby acting as a regulator of lipid homeostasis. Does not seem to deacetylate PC. Controls fatty acid oxidation by inhibiting PPARA transcriptional activation. Impairs SIRT1-PPARA interaction probably through the regulation of NAD(+) levels. Down-regulates insulin secretion. The sequence is that of NAD-dependent protein lipoamidase sirtuin-4, mitochondrial from Bos taurus (Bovine).